The following is a 388-amino-acid chain: MRYLTSGESHGPQLTVIVEGVPANLEVKVEDINREMFKRQGGYGRGRRMQIEKDTVEIVSGVRNGYTLGSPITMVVTNDDFTHWRKIMGAAPISDEERENMKRTITKPRPGHADLVGGMKYNHRDLRNVLERSSARETAARVAVGALCKVLLEQLDIEIYSRVVEIGGIKDKDFYDSETFKANLDRNDVRVIDDGIAQAMRDKIDEAKNDGDSIGGVVQVVVENMPVGVGSYVHYDRKLDGRIAQGVVSINAFKGVSFGEGFKAAEKPGSEIQDEILYNTELGYYRGSNHLGGLEGGMSNGMPIIVNGVMKPIPTLYKPLNSVDINTKEDFKATIERSDSCAVPAASIVCEHVVAFEIAKALLEEFQSNHIEQLKQQIIERRQLNIEF.

NADP(+)-binding residues include R39 and R45. FMN contacts are provided by residues 132–134 (RSS), 251–252 (NA), G296, 311–315 (KPIPT), and R337.

Belongs to the chorismate synthase family. As to quaternary structure, homotetramer. FMNH2 serves as cofactor.

It carries out the reaction 5-O-(1-carboxyvinyl)-3-phosphoshikimate = chorismate + phosphate. It functions in the pathway metabolic intermediate biosynthesis; chorismate biosynthesis; chorismate from D-erythrose 4-phosphate and phosphoenolpyruvate: step 7/7. Catalyzes the anti-1,4-elimination of the C-3 phosphate and the C-6 proR hydrogen from 5-enolpyruvylshikimate-3-phosphate (EPSP) to yield chorismate, which is the branch point compound that serves as the starting substrate for the three terminal pathways of aromatic amino acid biosynthesis. This reaction introduces a second double bond into the aromatic ring system. This Staphylococcus aureus (strain bovine RF122 / ET3-1) protein is Chorismate synthase.